The sequence spans 4466 residues: Dynein beta chain, ciliary (4466 aa).

Residues 1-1813 form a stem region; it reads MADVVDPRLE…YANICDAQFK (1813 aa). An ATP-binding site is contributed by 154-161; the sequence is AGQVKGKT. 4 coiled-coil regions span residues 733–805, 1036–1056, 1306–1337, and 1443–1468; these read TVLE…WTKQ, TLDQ…EADE, WLEI…AWDA, and LLKS…MTSK. 4 AAA regions span residues 1814–2035, 2095–2316, 2422–2669, and 2767–3016; these read YSYE…VLVV, KVVK…VRFK, ELDP…VFQG, and TYNE…ERRY. Residues 1852–1859, 2133–2140, 2460–2467, and 2805–2812 contribute to the ATP site; these read GPAGTGKT, GNAGTGKS, GNAGLGKS, and GVGGSGKQ. Coiled-coil stretches lie at residues 3033–3092, 3263–3325, and 3573–3642; these read SLLS…QVVG, EPKR…SRTI, and QERP…EEAK. The stalk stretch occupies residues 3033–3325; sequence SLLSMKSKEL…QEAEATSRTI (293 aa). 2 AAA regions span residues 3409–3636 and 3846–4072; these read LTDD…EISV and VRNF…VLYN.

The protein belongs to the dynein heavy chain family. Consists of at least two heavy chains (alpha and beta), three intermediate chains and several light chains.

It is found in the cell projection. Its subcellular location is the cilium. It localises to the flagellum. The protein localises to the cytoplasm. The protein resides in the cytoskeleton. It is found in the flagellum axoneme. In terms of biological role, force generating protein of eukaryotic cilia and flagella. Produces force towards the minus ends of microtubules. Dynein has ATPase activity; the force-producing power stroke is thought to occur on release of ADP. The protein is Dynein beta chain, ciliary of Tripneustes gratilla (Hawaian sea urchin).